The primary structure comprises 322 residues: Phosphatidylglycerol--prolipoprotein diacylglyceryl transferase (322 aa).

3 helical membrane-spanning segments follow: residues 23-43, 53-73, and 97-117; these read VYPI…AFFW, FFAL…LWFV, and GLSI…YIYF. Arginine 143 is a binding site for a 1,2-diacyl-sn-glycero-3-phospho-(1'-sn-glycerol). The next 2 helical transmembrane spans lie at 191-211 and 250-270; these read PLFL…VWII and LAAM…EIWA.

The protein belongs to the Lgt family.

The protein resides in the cell membrane. It carries out the reaction L-cysteinyl-[prolipoprotein] + a 1,2-diacyl-sn-glycero-3-phospho-(1'-sn-glycerol) = an S-1,2-diacyl-sn-glyceryl-L-cysteinyl-[prolipoprotein] + sn-glycerol 1-phosphate + H(+). The protein operates within protein modification; lipoprotein biosynthesis (diacylglyceryl transfer). Catalyzes the transfer of the diacylglyceryl group from phosphatidylglycerol to the sulfhydryl group of the N-terminal cysteine of a prolipoprotein, the first step in the formation of mature lipoproteins. The chain is Phosphatidylglycerol--prolipoprotein diacylglyceryl transferase from Mycoplasmopsis pulmonis (strain UAB CTIP) (Mycoplasma pulmonis).